The primary structure comprises 88 residues: Small ribosomal subunit protein bS16 (88 aa).

The protein belongs to the bacterial ribosomal protein bS16 family.

This is Small ribosomal subunit protein bS16 from Geobacter sp. (strain M21).